Here is a 216-residue protein sequence, read N- to C-terminus: Octanoyltransferase (216 aa).

The BPL/LPL catalytic domain maps to 35-213; that stretch reads NSNPDFIWIG…IIQEEFNFDF (179 aa). Substrate contacts are provided by residues 77 to 84, 144 to 146, and 157 to 159; these read RGGEVTCH, SIG, and GFS. The active-site Acyl-thioester intermediate is the Cys175.

It belongs to the LipB family.

It localises to the cytoplasm. The catalysed reaction is octanoyl-[ACP] + L-lysyl-[protein] = N(6)-octanoyl-L-lysyl-[protein] + holo-[ACP] + H(+). The protein operates within protein modification; protein lipoylation via endogenous pathway; protein N(6)-(lipoyl)lysine from octanoyl-[acyl-carrier-protein]: step 1/2. In terms of biological role, catalyzes the transfer of endogenously produced octanoic acid from octanoyl-acyl-carrier-protein onto the lipoyl domains of lipoate-dependent enzymes. Lipoyl-ACP can also act as a substrate although octanoyl-ACP is likely to be the physiological substrate. This is Octanoyltransferase from Prochlorococcus marinus (strain MIT 9312).